Consider the following 185-residue polypeptide: MSLIRKLKPGTISLVLGPMFAGKTTFLIHCINMLERLEKKVVFIKSTKNTRDKTIQTHSGIQLRPNQCKIIESAQLSDVGSLTDTHAVVIDEAHFFDDLIRCRTWADEKKIIILAGLNASFEQKMFQPIVRIFPYCNWVKYIGRTCMKCNRHNACFNVRKNADKTLILAGGSELYITCCNNCLKK.

ATP is bound at residue 17–24 (GPMFAGKT). The active-site Proton acceptor is Glu92. Position 121 (Phe121) interacts with substrate. Residues Cys146 and Cys149 each contribute to the Zn(2+) site. Residue 166-170 (LILAG) coordinates substrate. The Zn(2+) site is built by Cys179 and Cys182.

This sequence belongs to the thymidine kinase family.

It catalyses the reaction thymidine + ATP = dTMP + ADP + H(+). Its function is as follows. Phosphorylates thymidine. ASFV replicates in the cytoplasm of infected cells and contains genes encoding a number of enzymes needed for DNA synthesis, including thymidine kinase. Important for growth in swine macrophages in vitro and is a virus virulence factor in swine. The chain is Thymidine kinase from African swine fever virus (isolate Pig/Kenya/KEN-50/1950) (ASFV).